The sequence spans 527 residues: MFTARVARPMAGDDAPAASSGSTGSSAPPASSAADCVLEVRGVGKSFPGVVALDGVQFRVRRGTVHALMGENGAGKSTLMKIIAGVYTPDQGEILINGEPVVLNGPLDALDRGIAMIHQELNLMPYMTVAENIWIRREPKNRFGLIDHAALRRQTAELFERLSIDIDPETDVRTLTVASRQMVEIAKAVSFDSDVLIMDEPTSALTDKEVTHLFRIIRQLREQGKGIVYITHKMNELFEIADEFSVFRDGKYIGTHASSDVTRDDIIRMMVGREITQMFPKEEVPIGDVVLSVKNLGVDGVFRDVSFELRAGEILGVAGLVGSGRSNVAEALFGVVPATSGEIRIDGKPVRITTPGQAMKHGMAFLTEDRKDTGCFLNLDLLANMEAAVLSNRYVKFNFVRQAQLKRDCEEMSRMLRVKSPGLHEEIQNLSGGNQQKVLIGRWLLTQPRILILDEPTRGIDVGAKAEIHRLVSALAGKGVAVLMISSEMPEVLGMSDRVMVMHEGRMTGIVDRKDADQVRIMDLASR.

A disordered region spans residues 1-31 (MFTARVARPMAGDDAPAASSGSTGSSAPPAS). Over residues 12–31 (GDDAPAASSGSTGSSAPPAS) the composition is skewed to low complexity. ABC transporter domains are found at residues 38–274 (LEVR…VGRE) and 284–523 (VPIG…RIMD). 70–77 (GENGAGKS) is an ATP binding site.

It belongs to the ABC transporter superfamily. Carbohydrate importer 2 (CUT2) (TC 3.A.1.2) family.

Its subcellular location is the cell inner membrane. The catalysed reaction is D-ribose(out) + ATP + H2O = D-ribose(in) + ADP + phosphate + H(+). It catalyses the reaction D-galactose(out) + ATP + H2O = D-galactose(in) + ADP + phosphate + H(+). Functionally, part of an ABC transporter complex involved in carbohydrate import. Could be involved in ribose, galactose and/or methyl galactoside import. Responsible for energy coupling to the transport system. The chain is Putative ribose/galactose/methyl galactoside import ATP-binding protein 2 from Burkholderia lata (strain ATCC 17760 / DSM 23089 / LMG 22485 / NCIMB 9086 / R18194 / 383).